A 279-amino-acid chain; its full sequence is H-2 class II histocompatibility antigen gamma chain (279 aa).

Residues 1 to 23 (MDDQRDLISNHEQLPILGNRPRE) form a disordered region. The Cytoplasmic portion of the chain corresponds to 1 to 29 (MDDQRDLISNHEQLPILGNRPREPERCSR). S9 bears the Phosphoserine mark. The chain crosses the membrane as a helical; Signal-anchor for type II membrane protein span at residues 30–55 (GALYTGVSVLVALLLAGQATTAYFLY). The Extracellular portion of the chain corresponds to 56–279 (QQQGRLDKLT…TRQELGQVTL (224 aa)). Residues N113 and N119 are each glycosylated (N-linked (GlcNAc...) asparagine). In terms of domain architecture, Thyroglobulin type-1 spans 193–254 (LTKCQEEVSH…HTKSRGRHNC (62 aa)). 3 disulfide bridges follow: C196–C215, C226–C233, and C235–C254. Residue S265 is glycosylated (O-linked (Xyl...) (chondroitin sulfate) serine).

Nonamer composed of three alpha/beta/gamma heterotrimers. Interacts with CD44; this complex is essential for the MIF-induced signaling cascade that results in B cell survival. In terms of assembly, interacts with the mature form of CTSL; the complex survive in neutral pH environment. Expressed in thymus and lymph noodes. Expressed by antigen-presenting cells (APCs). As to expression, expressed in thymus and lymph noodes.

It localises to the late endosome. Its subcellular location is the lysosome. It is found in the cell membrane. The protein localises to the endoplasmic reticulum membrane. The protein resides in the golgi apparatus. It localises to the trans-Golgi network. Its subcellular location is the endosome. It is found in the secreted. Its function is as follows. Plays a critical role in MHC class II antigen processing by stabilizing peptide-free class II alpha/beta heterodimers in a complex soon after their synthesis and directing transport of the complex from the endoplasmic reticulum to compartments where peptide loading of class II takes place. Enhance also the stimulation of T-cell responses through interaction with CD44. Stabilizes the conformation of mature CTSL by binding to its active site and serving as a chaperone to help maintain a pool of mature enzyme in endocytic compartments and extracellular space of antigen-presenting cells (APCs). In terms of biological role, binds to the peptide-binding site of MHC class II alpha/beta heterodimers forming an alpha-beta-CLIP complex, thereby preventing the loading of antigenic peptides to the MHC class II complex until its release by HLA-DM in the endosome. This is H-2 class II histocompatibility antigen gamma chain from Mus musculus (Mouse).